The primary structure comprises 482 residues: Iroquois-class homeodomain protein irx-5 (482 aa).

The homeobox DNA-binding region spans 109–171 (DPAYRKNATR…NARRRLKKEN (63 aa)). Disordered regions lie at residues 173–307 (MTWT…HQSH) and 462–482 (QSQA…MSSI). Acidic residues predominate over residues 182–198 (EDEEDDENIDLEKNEED). Positions 199-256 (DPRKLEEKGDQDGDAGDQKRSPSAVDFDRLEGEVRQGKELDQTRSDSEQNEVEERNDL) are enriched in basic and acidic residues. The span at 264–273 (PTSPLCPPDQ) shows a compositional bias: pro residues. The span at 284–305 (HRHTVHNHHHQSIQQLHHHSHQ) shows a compositional bias: basic residues. The segment covering 467–482 (LNKDTPYEMKKGMSSI) has biased composition (basic and acidic residues).

This sequence belongs to the TALE/IRO homeobox family. As to expression, expressed in the neural plate in overlapping patterns with other irx members, which all share an anterior border of expression. Broadly expressed in the tailbud rhombencephalon (hindbrain). Outside the nervous system and at tailbud stages, expressed in the developing otic vesicle and branchial arches.

It is found in the nucleus. Functionally, acts partially redundantly with other irx members in neural patterning. Required for formation of the posterior forebrain, midbrain, hindbrain, and to a lesser extent, spinal cord. Patterns the neuroectoderm in both the anterior/posterior and dorsal/ventral axes. Does not appear to play a role in pronephros kidney development. Involved in craniofacial and gonadal development. Modulates the migration of progenitor cell populations in branchial arches and gonads by repressing CXCL12. The polypeptide is Iroquois-class homeodomain protein irx-5 (Xenopus tropicalis (Western clawed frog)).